The primary structure comprises 350 residues: Phosphatidylinositol transfer protein PDR17 (350 aa).

The CRAL-TRIO domain maps to 139–297 (KVAVENETGK…LYNGLLDFKY (159 aa)).

In terms of assembly, interacts with phosphatidylserine decarboxylase PSD2. Also interacts with PBI1.

It localises to the cytoplasm. The protein resides in the microsome. It carries out the reaction a 1,2-diacyl-sn-glycero-3-phospho-(1D-myo-inositol)(in) = a 1,2-diacyl-sn-glycero-3-phospho-(1D-myo-inositol)(out). Has phosphatidylinositol transfer activity. Involved in the regulation of the phospholipid composition of plasma- and endomembranes. Altering plasma membrane composition may provide a possible mechanism for multidrug resistance. Contributes to efficient phospholipase D1 activation and phospholipase B1 inhibition in the regulation of phospholipid turnover. Forms a complex with phosphatidylserine decarboxylase PSD2 that seems essential for maintenance of vacuolar phosphatidylethanolamine (PE) levels. Allows interorganelle phosphatidylserine (PtdSer) transport via a process that involves the acceptor membrane complex PDR17-PDS2 that binds to PBI1 which in turn ligates to SCS2 and phosphatidic acid present in the donor membrane, forming a zone of apposition that facilitates PtdSer transfer. In Saccharomyces cerevisiae (strain ATCC 204508 / S288c) (Baker's yeast), this protein is Phosphatidylinositol transfer protein PDR17.